We begin with the raw amino-acid sequence, 754 residues long: tRNA 5-methylaminomethyl-2-thiouridine biosynthesis bifunctional protein MnmC (754 aa).

The tract at residues 1–320 (MPSCYEHSAQ…RRQAVNNSDS (320 aa)) is tRNA (mnm(5)s(2)U34)-methyltransferase. The FAD-dependent cmnm(5)s(2)U34 oxidoreductase stretch occupies residues 324–754 (IGGGIAGACL…RKLLKGKALC (431 aa)).

In the N-terminal section; belongs to the methyltransferase superfamily. tRNA (mnm(5)s(2)U34)-methyltransferase family. This sequence in the C-terminal section; belongs to the DAO family. FAD serves as cofactor.

The protein resides in the cytoplasm. It catalyses the reaction 5-aminomethyl-2-thiouridine(34) in tRNA + S-adenosyl-L-methionine = 5-methylaminomethyl-2-thiouridine(34) in tRNA + S-adenosyl-L-homocysteine + H(+). Catalyzes the last two steps in the biosynthesis of 5-methylaminomethyl-2-thiouridine (mnm(5)s(2)U) at the wobble position (U34) in tRNA. Catalyzes the FAD-dependent demodification of cmnm(5)s(2)U34 to nm(5)s(2)U34, followed by the transfer of a methyl group from S-adenosyl-L-methionine to nm(5)s(2)U34, to form mnm(5)s(2)U34. This Shewanella denitrificans (strain OS217 / ATCC BAA-1090 / DSM 15013) protein is tRNA 5-methylaminomethyl-2-thiouridine biosynthesis bifunctional protein MnmC.